We begin with the raw amino-acid sequence, 56 residues long: Large ribosomal subunit protein bL32 (56 aa).

Residues 1 to 27 form a disordered region; it reads MAVQQNKKSRSRRDMRRSHDALTTAAV. The span at 7–16 shows a compositional bias: basic residues; the sequence is KKSRSRRDMR.

The protein belongs to the bacterial ribosomal protein bL32 family.

This chain is Large ribosomal subunit protein bL32, found in Actinobacillus pleuropneumoniae serotype 7 (strain AP76).